A 341-amino-acid polypeptide reads, in one-letter code: Heat-inducible transcription repressor HrcA (341 aa).

It belongs to the HrcA family.

Functionally, negative regulator of class I heat shock genes (grpE-dnaK-dnaJ and groELS operons). Prevents heat-shock induction of these operons. This chain is Heat-inducible transcription repressor HrcA, found in Carboxydothermus hydrogenoformans (strain ATCC BAA-161 / DSM 6008 / Z-2901).